Here is a 732-residue protein sequence, read N- to C-terminus: Subtilisin-like protease SBT4.13 (732 aa).

The signal sequence occupies residues 1–24; that stretch reads MATLAASSSLLSCLLVLFLSSVSA. Positions 25–109 are cleaved as a propeptide — activation peptide; that stretch reads VTDDKQVYIV…VFPNKKLQLQ (85 aa). The 78-residue stretch at 31-108 folds into the Inhibitor I9 domain; it reads VYIVYMGSLS…SVFPNKKLQL (78 aa). Residues 113 to 579 enclose the Peptidase S8 domain; sequence SWDFMGLKEG…SGHVDPIAAS (467 aa). Aspartate 141 (charge relay system) is an active-site residue. N-linked (GlcNAc...) asparagine glycosylation occurs at asparagine 172. The active-site Charge relay system is histidine 196. A glycan (N-linked (GlcNAc...) asparagine) is linked at asparagine 219. The PA domain occupies 352–436; the sequence is DYPLVYGKSA…GLLTEDFESL (85 aa). N-linked (GlcNAc...) asparagine glycosylation occurs at asparagine 458. The active-site Charge relay system is the serine 518. N-linked (GlcNAc...) asparagine glycans are attached at residues asparagine 555, asparagine 600, asparagine 648, and asparagine 658.

The protein belongs to the peptidase S8 family. In terms of processing, the C-terminal propeptide is autocleaved.

It is found in the secreted. The chain is Subtilisin-like protease SBT4.13 from Arabidopsis thaliana (Mouse-ear cress).